Reading from the N-terminus, the 390-residue chain is Oxygen-dependent coproporphyrinogen-III oxidase (390 aa).

Residues 131-140 (VLQDGDVFEK) are important for dimerization. Ser-181 contributes to the substrate binding site. The active-site Proton donor is His-195. Residues 197–199 (NYR) and 348–353 (GARYES) contribute to the substrate site. Residues 329–365 (YVEFNLIYDRGTKFGLYTPGARYESILMSLPLHARWE) are important for dimerization.

It belongs to the aerobic coproporphyrinogen-III oxidase family. As to quaternary structure, homodimer.

The catalysed reaction is coproporphyrinogen III + O2 + 2 H(+) = protoporphyrinogen IX + 2 CO2 + 2 H2O. The protein operates within porphyrin-containing compound metabolism; protoporphyrin-IX biosynthesis; protoporphyrinogen-IX from coproporphyrinogen-III (O2 route): step 1/1. In terms of biological role, involved in the heme biosynthesis. Catalyzes the aerobic oxidative decarboxylation of propionate groups of rings A and B of coproporphyrinogen-III to yield the vinyl groups in protoporphyrinogen-IX. This Drosophila melanogaster (Fruit fly) protein is Oxygen-dependent coproporphyrinogen-III oxidase (Coprox).